Consider the following 277-residue polypeptide: Energy-coupling factor transporter ATP-binding protein EcfA1 (277 aa).

The region spanning 4 to 238 (IETQDLCHTY…PDLLSSVRLD (235 aa)) is the ABC transporter domain. 37–44 (GPNGAGKS) lines the ATP pocket.

Belongs to the ABC transporter superfamily. Energy-coupling factor EcfA family. Forms a stable energy-coupling factor (ECF) transporter complex composed of 2 membrane-embedded substrate-binding proteins (S component), 2 ATP-binding proteins (A component) and 2 transmembrane proteins (T component).

The protein localises to the cell membrane. Its function is as follows. ATP-binding (A) component of a common energy-coupling factor (ECF) ABC-transporter complex. Unlike classic ABC transporters this ECF transporter provides the energy necessary to transport a number of different substrates. The sequence is that of Energy-coupling factor transporter ATP-binding protein EcfA1 from Methanospirillum hungatei JF-1 (strain ATCC 27890 / DSM 864 / NBRC 100397 / JF-1).